The following is a 657-amino-acid chain: 1-deoxy-D-xylulose-5-phosphate synthase (657 aa).

Thiamine diphosphate-binding positions include His-73 and 113 to 115; that span reads SHA. Asp-145 serves as a coordination point for Mg(2+). Thiamine diphosphate-binding positions include 146–147, Asn-175, Tyr-293, and Glu-375; that span reads GA. Mg(2+) is bound at residue Asn-175.

It belongs to the transketolase family. DXPS subfamily. In terms of assembly, homodimer. The cofactor is Mg(2+). Thiamine diphosphate serves as cofactor.

It catalyses the reaction D-glyceraldehyde 3-phosphate + pyruvate + H(+) = 1-deoxy-D-xylulose 5-phosphate + CO2. Its pathway is metabolic intermediate biosynthesis; 1-deoxy-D-xylulose 5-phosphate biosynthesis; 1-deoxy-D-xylulose 5-phosphate from D-glyceraldehyde 3-phosphate and pyruvate: step 1/1. Its function is as follows. Catalyzes the acyloin condensation reaction between C atoms 2 and 3 of pyruvate and glyceraldehyde 3-phosphate to yield 1-deoxy-D-xylulose-5-phosphate (DXP). The chain is 1-deoxy-D-xylulose-5-phosphate synthase from Pseudarthrobacter chlorophenolicus (strain ATCC 700700 / DSM 12829 / CIP 107037 / JCM 12360 / KCTC 9906 / NCIMB 13794 / A6) (Arthrobacter chlorophenolicus).